The following is a 486-amino-acid chain: MSTFYTVISWLLVFGYWLLIAGVTLRILMKRRAVPSAMAWLLVIYILPLVGIVAYLSFGELHLGKRRAERASKMWPSTAKWLRELKEYRRIFATENSEVASALFQLCERRQGVGGVKGNQLQLMTTFDDTIKALLRDIELARSNIEMVFYIWQPGGLVEQVSSSLIAAARRGVHCRILLDSAGSVQFFRQHHPELMRTAGIEVVEALKVNLFRAFLRRMDLRQHRKIILIDNRIAYTGSMNMVDPRFFKQDAGVGQWIDLMARIEGPVATTLGIIYCCDWEMETGKRLLPPPPDVNVMPFEQESGHTIQVIASGPGYPEEMIHQALLTSVYSARKQLIMTTPYFVPSDDLLHAICTAAQRGVDVSIIVPHKNDSVLVGWASRAFFTELLAAGVKIYQFKDGLLHTKSVLVDGQLSLVGTVNLDMRSLWLNFEITLVIDDAGFGSDLACVQEDYIARSRLLNATQWQNRPYWQRIVERLFYFFSPLL.

2 helical membrane-spanning segments follow: residues 3–23 and 38–58; these read TFYT…IAGV and MAWL…YLSF. PLD phosphodiesterase domains are found at residues 219 to 246 and 399 to 426; these read MDLR…VDPR and KDGL…DMRS. Catalysis depends on residues histidine 224, lysine 226, aspartate 231, histidine 404, lysine 406, and aspartate 411.

It belongs to the phospholipase D family. Cardiolipin synthase subfamily. ClsA sub-subfamily.

The protein resides in the cell inner membrane. The catalysed reaction is 2 a 1,2-diacyl-sn-glycero-3-phospho-(1'-sn-glycerol) = a cardiolipin + glycerol. Functionally, catalyzes the reversible phosphatidyl group transfer from one phosphatidylglycerol molecule to another to form cardiolipin (CL) (diphosphatidylglycerol) and glycerol. This Pectobacterium carotovorum subsp. carotovorum (strain PC1) protein is Cardiolipin synthase A.